An 883-amino-acid polypeptide reads, in one-letter code: Phosphoenolpyruvate carboxylase (883 aa).

Residues H138 and K546 contribute to the active site.

It belongs to the PEPCase type 1 family. As to quaternary structure, homotetramer. The cofactor is Mg(2+).

The catalysed reaction is oxaloacetate + phosphate = phosphoenolpyruvate + hydrogencarbonate. The enzyme has distinct binding sites for each of the allosteric effectors such as acetyl-CoA, fructose 1,6-bisphosphate, guanosine 3'-diphosphate 5'-diphosphate, long chain fatty acids, and L-aspartate. Forms oxaloacetate, a four-carbon dicarboxylic acid source for the tricarboxylic acid cycle. This is Phosphoenolpyruvate carboxylase (ppc) from Salmonella typhi.